The chain runs to 54 residues: Large ribosomal subunit protein bL32 (54 aa).

The protein belongs to the bacterial ribosomal protein bL32 family.

In Buchnera aphidicola subsp. Baizongia pistaciae (strain Bp), this protein is Large ribosomal subunit protein bL32.